Reading from the N-terminus, the 367-residue chain is Probable butyrate kinase (367 aa).

This sequence belongs to the acetokinase family.

The protein localises to the cytoplasm. The catalysed reaction is butanoate + ATP = butanoyl phosphate + ADP. The protein is Probable butyrate kinase of Exiguobacterium sibiricum (strain DSM 17290 / CCUG 55495 / CIP 109462 / JCM 13490 / 255-15).